Reading from the N-terminus, the 203-residue chain is Nudix hydrolase 12, mitochondrial (203 aa).

The Nudix hydrolase domain occupies 18 to 166 (NFRLVSGCIP…WMQRALEEFL (149 aa)). Positions 66 to 87 (GGWEDDETVLEAASREAIEEAG) match the Nudix box motif. The Mg(2+) site is built by glutamate 81 and glutamate 85.

Belongs to the Nudix hydrolase family. Mg(2+) serves as cofactor. Mn(2+) is required as a cofactor. As to expression, expressed in roots, leaves, stems and inflorescences.

Its subcellular location is the mitochondrion. In terms of biological role, probably mediates the hydrolysis of some nucleoside diphosphate derivatives. The polypeptide is Nudix hydrolase 12, mitochondrial (NUDT12) (Arabidopsis thaliana (Mouse-ear cress)).